We begin with the raw amino-acid sequence, 333 residues long: Polygalacturonase inhibitor (333 aa).

The first 27 residues, 1-27, serve as a signal peptide directing secretion; sequence METSKLFLLSSSLLLVLLATRPCPSLS. Disulfide bonds link C30–C60 and C61–C68. LRR repeat units follow at residues 72–96, 97–120, 121–144, 145–169, 170–192, 194–220, 221–240, 241–263, 264–288, and 290–312; these read THRI…VGDL, PFLE…AIAK, LKHL…FFSE, LKNL…LSLL, PNLG…SFGK, AGST…GFDP, NVMD…FFNA, NKST…RVEF, PKSL…MTSL, and LQFL…KLQS. N-linked (GlcNAc...) asparagine glycosylation is found at N109, N133, N147, and N157. N241 carries N-linked (GlcNAc...) asparagine glycosylation. N-linked (GlcNAc...) asparagine glycosylation occurs at N294. Intrachain disulfides connect C301-C323 and C325-C332.

The protein belongs to the polygalacturonase-inhibiting protein family.

It is found in the secreted. Its subcellular location is the cell wall. It localises to the membrane. In terms of biological role, inhibitor of fungal polygalacturonase. It is an important factor for plant resistance to phytopathogenic fungi. In Vitis vinifera (Grape), this protein is Polygalacturonase inhibitor (pgip).